The chain runs to 210 residues: Large ribosomal subunit protein uL3 (210 aa).

Residue Gln151 is modified to N5-methylglutamine.

The protein belongs to the universal ribosomal protein uL3 family. Part of the 50S ribosomal subunit. Forms a cluster with proteins L14 and L19. Methylated by PrmB.

Functionally, one of the primary rRNA binding proteins, it binds directly near the 3'-end of the 23S rRNA, where it nucleates assembly of the 50S subunit. In Aeromonas hydrophila subsp. hydrophila (strain ATCC 7966 / DSM 30187 / BCRC 13018 / CCUG 14551 / JCM 1027 / KCTC 2358 / NCIMB 9240 / NCTC 8049), this protein is Large ribosomal subunit protein uL3.